We begin with the raw amino-acid sequence, 217 residues long: Thymidylate kinase (217 aa).

Residue 7–14 (GIDGAGKS) participates in ATP binding.

It belongs to the thymidylate kinase family.

The enzyme catalyses dTMP + ATP = dTDP + ADP. In terms of biological role, phosphorylation of dTMP to form dTDP in both de novo and salvage pathways of dTTP synthesis. The sequence is that of Thymidylate kinase from Pelodictyon phaeoclathratiforme (strain DSM 5477 / BU-1).